The following is a 309-amino-acid chain: 1,4-dihydroxy-2-naphthoyl-CoA synthase (309 aa).

Substrate-binding positions include R53, 98 to 102 (SGGDQ), Y110, 152 to 156 (WAAGG), T179, S185, Y282, and K297.

It belongs to the enoyl-CoA hydratase/isomerase family. MenB subfamily.

The enzyme catalyses 2-succinylbenzoyl-CoA + H(+) = 1,4-dihydroxy-2-naphthoyl-CoA + H2O. It participates in quinol/quinone metabolism; 1,4-dihydroxy-2-naphthoate biosynthesis; 1,4-dihydroxy-2-naphthoate from chorismate: step 6/7. It functions in the pathway quinol/quinone metabolism; menaquinone biosynthesis. Functionally, converts o-succinylbenzoyl-CoA (OSB-CoA) to 1,4-dihydroxy-2-naphthoyl-CoA (DHNA-CoA). The protein is 1,4-dihydroxy-2-naphthoyl-CoA synthase of Mycolicibacterium smegmatis (strain ATCC 700084 / mc(2)155) (Mycobacterium smegmatis).